Consider the following 207-residue polypeptide: MPLPDFRLIRLLPLAALVLTACSVTTPKGPGKSPDSPQWRQHQQDVRNLNQYQTRGSFAYISDQQKVYARFFWQQTGQDRYRLLLTNPLGSTELELNAQPGNVQLVDNKGQRYTSDDAEEMIGKLTGMPIPLNSLRQWILGLPGDATDYKLDDQYRLSEITYSQNGKNWKVVYGGYDTKTQPAMPANMELTDGGQRIKLKMDNWIVK.

The first 21 residues, 1 to 21 (MPLPDFRLIRLLPLAALVLTA), serve as a signal peptide directing secretion. Cysteine 22 carries the N-palmitoyl cysteine lipid modification. The S-diacylglycerol cysteine moiety is linked to residue cysteine 22.

Belongs to the LolB family. Monomer.

It localises to the cell outer membrane. Its function is as follows. Plays a critical role in the incorporation of lipoproteins in the outer membrane after they are released by the LolA protein. This is Outer-membrane lipoprotein LolB from Escherichia coli O7:K1 (strain IAI39 / ExPEC).